The sequence spans 475 residues: GDP-fucose protein O-fucosyltransferase 3 (475 aa).

Topologically, residues 1–8 (MVRMRRKR) are cytoplasmic. The helical; Signal-anchor for type II membrane protein transmembrane segment at 9-29 (LWASCICFAAFFFLLVTLQVI) threads the bilayer. Residues 30–475 (TELGNSENKA…QEFWMLVFKQ (446 aa)) are Lumenal-facing. Residues Asn107, Asn165, and Asn315 are each glycosylated (N-linked (GlcNAc...) asparagine). The cysteines at positions 386 and 389 are disulfide-linked. A glycan (N-linked (GlcNAc...) asparagine) is linked at Asn462.

Belongs to the glycosyltransferase 10 family.

The protein localises to the endoplasmic reticulum membrane. The catalysed reaction is L-threonyl-[protein] + GDP-beta-L-fucose = 3-O-(alpha-L-fucosyl)-L-threonyl-[protein] + GDP + H(+). It carries out the reaction L-seryl-[protein] + GDP-beta-L-fucose = 3-O-(alpha-L-fucosyl)-L-seryl-[protein] + GDP + H(+). It participates in protein modification; protein glycosylation. In terms of biological role, protein O-fucosyltransferase that specifically catalyzes O-fucosylation of serine or threonine residues in EMI domains of target proteins. Attaches fucose through an O-glycosidic linkage. O-fucosylation of EMI domain-containing proteins may be required for facilitating protein folding and secretion. This is GDP-fucose protein O-fucosyltransferase 3 (FUT10) from Gallus gallus (Chicken).